The chain runs to 287 residues: Pantothenate synthetase (287 aa).

30-37 (MGNLHSGH) is a binding site for ATP. The active-site Proton donor is the H37. A (R)-pantoate-binding site is contributed by Q61. Position 61 (Q61) interacts with beta-alanine. 149 to 152 (GEKD) is a binding site for ATP. Q155 lines the (R)-pantoate pocket. Residues V178 and 186-189 (LSSR) each bind ATP.

It belongs to the pantothenate synthetase family. In terms of assembly, homodimer.

Its subcellular location is the cytoplasm. It catalyses the reaction (R)-pantoate + beta-alanine + ATP = (R)-pantothenate + AMP + diphosphate + H(+). Its pathway is cofactor biosynthesis; (R)-pantothenate biosynthesis; (R)-pantothenate from (R)-pantoate and beta-alanine: step 1/1. Its function is as follows. Catalyzes the condensation of pantoate with beta-alanine in an ATP-dependent reaction via a pantoyl-adenylate intermediate. The chain is Pantothenate synthetase from Pseudomonas entomophila (strain L48).